We begin with the raw amino-acid sequence, 427 residues long: UDP-N-acetylglucosamine 1-carboxyvinyltransferase (427 aa).

24–25 (KN) contributes to the phosphoenolpyruvate binding site. Residue R95 participates in UDP-N-acetyl-alpha-D-glucosamine binding. The active-site Proton donor is the C119. 2-(S-cysteinyl)pyruvic acid O-phosphothioketal is present on C119. UDP-N-acetyl-alpha-D-glucosamine is bound by residues 124–128 (RPVDQ), D308, and V330.

This sequence belongs to the EPSP synthase family. MurA subfamily.

It is found in the cytoplasm. The enzyme catalyses phosphoenolpyruvate + UDP-N-acetyl-alpha-D-glucosamine = UDP-N-acetyl-3-O-(1-carboxyvinyl)-alpha-D-glucosamine + phosphate. The protein operates within cell wall biogenesis; peptidoglycan biosynthesis. Its function is as follows. Cell wall formation. Adds enolpyruvyl to UDP-N-acetylglucosamine. The sequence is that of UDP-N-acetylglucosamine 1-carboxyvinyltransferase from Deinococcus geothermalis (strain DSM 11300 / CIP 105573 / AG-3a).